The sequence spans 119 residues: Beta-2-microglobulin (119 aa).

The first 20 residues, 1–20 (MSRSVALAVLALLSLSGLEA), serve as a signal peptide directing secretion. The 90-residue stretch at 25 to 114 (PKIQVYSRHP…VTLSGPRTVK (90 aa)) folds into the Ig-like C1-type domain. Cys-45 and Cys-100 are oxidised to a cystine.

The protein belongs to the beta-2-microglobulin family. Heterodimer of an alpha chain and a beta chain. Beta-2-microglobulin is the beta-chain of major histocompatibility complex class I molecules.

The protein localises to the secreted. Functionally, component of the class I major histocompatibility complex (MHC). Involved in the presentation of peptide antigens to the immune system. This chain is Beta-2-microglobulin (B2M), found in Papio anubis (Olive baboon).